The primary structure comprises 222 residues: Glycerol-3-phosphate acyltransferase (222 aa).

The next 6 helical transmembrane spans lie at 4–24 (ALLL…IPTG), 56–76 (PAAI…VALV), 87–107 (ALPA…VVLG), 130–150 (FMLN…VIFF), 153–173 (IVSL…LALQ), and 174–191 (LPPP…YVIV).

The protein belongs to the PlsY family. As to quaternary structure, probably interacts with PlsX.

Its subcellular location is the cell inner membrane. The enzyme catalyses an acyl phosphate + sn-glycerol 3-phosphate = a 1-acyl-sn-glycero-3-phosphate + phosphate. The protein operates within lipid metabolism; phospholipid metabolism. Functionally, catalyzes the transfer of an acyl group from acyl-phosphate (acyl-PO(4)) to glycerol-3-phosphate (G3P) to form lysophosphatidic acid (LPA). This enzyme utilizes acyl-phosphate as fatty acyl donor, but not acyl-CoA or acyl-ACP. In Synechocystis sp. (strain ATCC 27184 / PCC 6803 / Kazusa), this protein is Glycerol-3-phosphate acyltransferase.